Here is a 5541-residue protein sequence, read N- to C-terminus: Malpibaldin synthetase (5541 aa).

Basic and acidic residues predominate over residues 1 to 13; it reads MGDKRPDGIKSAE. The disordered stretch occupies residues 1 to 26; it reads MGDKRPDGIKSAESHGQPSAPFGAEN. Residues 137 to 378 are condensation 1; sequence KEDDIARDES…IDIISPAEKT (242 aa). An adenylation 1 region spans residues 401–799; it reads FEEQVDKSPD…GRNDDQVKIR (399 aa). Residues 901–975 enclose the Carrier 1 domain; sequence VPCGETEDAI…VLAQDLSKHQ (75 aa). The residue at position 936 (serine 936) is an O-(pantetheine 4'-phosphoryl)serine. A dual epimerase/condensation (E/C) domain 1 region spans residues 1021–1469; the sequence is QDVYSLAPLQ…LPLDERTKLL (449 aa). Residues 1489 to 1899 are adenylation 2; sequence FEQQVKQSPI…GRNDDQIKIR (411 aa). The Carrier 2 domain occupies 2001-2075; it reads SPQGRIECAL…SFAQAFKGQL (75 aa). An O-(pantetheine 4'-phosphoryl)serine modification is found at serine 2036. Residues 2095–2537 are condensation 2; sequence ELSFSQQRLW…LGSTEEELLL (443 aa). Residues 2557-2956 are adenylation 3; it reads FEDQVERSPD…GRNDDQVKIR (400 aa). In terms of domain architecture, Carrier 3 spans 3058–3132; the sequence is EPQGEVEMKL…VLAASITRGC (75 aa). At serine 3093 the chain carries O-(pantetheine 4'-phosphoryl)serine. The segment at 3182-3616 is dual epimerase/condensation (E/C) domain 2; it reads QDIYSLSPLQ…VIPAEEHDLL (435 aa). The segment at 3637–4038 is adenylation 4; that stretch reads FENQVRERPE…GRNDEQVKIR (402 aa). The Carrier 4 domain occupies 4140–4214; the sequence is APRGDIEISL…VLAASLNTHQ (75 aa). Position 4175 is an O-(pantetheine 4'-phosphoryl)serine (serine 4175). A dual epimerase/condensation (E/C) domain 3 region spans residues 4260 to 4695; the sequence is VQDVYSLSPL…VIPAEEHDLL (436 aa). Residues 4716 to 5117 form an adenylation 5 region; that stretch reads FENQVRERPE…GRNDEQVKIR (402 aa). Residues 5219–5294 enclose the Carrier 5 domain; it reads LPSGDVEIGL…ELAQKLVQGG (76 aa). Serine 5254 is subject to O-(pantetheine 4'-phosphoryl)serine. The segment at 5315–5523 is thioesterase (TE) domain; the sequence is PLFCIHSGLG…VECTHIEMDK (209 aa).

The protein belongs to the NRP synthetase family.

Nonribosomal peptide synthetase that catalyzes the biosynthesis of the hydrophobic cyclopentapeptides malpibaldins, natural products that show biosurfactant activities. Module 3 shows promiscuous adenylation (accepting either Trp, Phe or Tyr) leading to the parallel production of multiple products from one NRPS assembly line, including malpibaldin A corresponding to cyclo(-L-Leu-D-Leu-D-Phe-L-Leu-D-Val-), malpibaldin B corresponding to cyclo(-L-Leu-D-Leu-D-Tyr-L-Leu-D-Val-) and malpibaldin C corresponding to cyclo(-Leu-Leu-Trp-Leu-Val-). The sequence is that of Malpibaldin synthetase from Mortierella alpina (Oleaginous fungus).